The chain runs to 1792 residues: MSQRGDRGEGHARRPGRSSSFGGGHRGGGGVGGAGKGGGGSSGQPPLATNRSFRKSGNGHGGHQRAVSQPDTHGFQPAPAPTALQTPPLRPPAPQNAPAHVPVPAPRPQHHDPSGARAPTLPPSSENTANAPPLKGIPHAAPRAPSRISSTSTSQGAPKGGAYNLQFGSFPMNGGTGGSTMQFPARTSSAPPNLDEQKRMQALPEGHKVVPSGLVPQAPKHQQQQQPLQQQKQQPQSQPPLQQTRKDVVSSNHSSKPINPHIPSQVKSSVHVSPSVPNVAPPRPPVQQIPGMPMSMPFHHQAPLQFGGHNPQIPPQGVVPSSLQMSMGLHGANAPQVAQQMYIPTIQHHHQLQPPTMMHQAAGIPYGPAAHQLTQMSGMMNVGVAPQFTPQQPNKYVTGPTRKTTVKITHPDTHEELKLDKRMDSSGQRGLPSVQQQSQPVSTYGSPMGFYQQNSYNQSTMFYPTTSGVGQVPTVSQGPRFVSTQTVSYISPSMNTGPGSNKDNLAGSTTSGHSQVTGKPHPAGLHMEKSGVQTVTISAPPGKSDVNKLKPAEDVVSHRQKDNEAVSGVRKSGENESKASPITEKHPTPVSQPLQALAANPETTAAASFVVNSVPGDDGKSKESIQRTGSFKDSNKNATKDTRNLSQEPQSASSAEDLKVHTSVKDVCCGVSLMESKGVNKESEQTNAASASPTEMLKAADASSIDRSSARSTSESTENVQEVGKSDVAIGDSEKSGITNKVSPDLTKDDISSGSTGNESHEVCTLDLAEQLPVGASNPDNLDTATSVTDQGQLLKEPSSSVSDENVIMDRSHQSAEKMSDLVDDTVASVASSETLPESIIQNANAKGNTSGNQETGSATSSNILNVLPVPHSVASEDPLKPESMLKDQSSSAPAASARPVSREKPSVEITRTKFTAVKKKKRREMLSKADAAGSSDLYNAYKGPEEKVDFIGASESLDSSSIADHELPDESSEKEVNMGEDEGKKKVELDDWEDAAEMSTPKLERSDSSNQTTEANGRKRYSRDFLLTLAQSCTNLPVGFQMIEYASVLFPNLAGKSYVVDHPSPGRGADRPASRGDRRGVVIEDDRWGKSGHLFGSGRDMSMDNGPPTMNHRGAPGVMRNPRGGLINVGPVAPQMSRSGSDADRWQQKGIFPSPVTPMQVMHKAEKKYVVGKVSDEEEAKQRQLKAILNKLTPQNFEKLFEKVKEVNIDNVATLTGVISQIFDKALMEPTFCEMYANFCFHLAGALPDFSEDNEKITFKRLLLNKCQEEFERGEREEAEADKTEEEGEIKQTKEEREEKRIRARRRMLGNIRLIGELYKKRMLTERIMHECIKKLLGNYQNPDEENIEALCKLMSTIGEMIDHAKAKEHMDAYFDIMLKLSTSQQLSSRVRFMLRDSIDLRKNKWQQRRKVEGPKKIDEVHRDAAQERHAQSSRLARGSVVGSGPRRGAAPMDYGPRGSAAALASPSSQQVGHRGMPSHSRGFGTQDIRFEERSPLDHRTTVLPPRKDEAITLGPQGGLARGMSIRGQPLISNAELSSADSRRMVSGPNGYNSASTAREEPGSRIPDRSGRIAPNTQFAGPSNRPASQEGRSGNKLYSEDDLREKSISAIREYYSAKDEKEVALCIEELNAPSFYPSVVSLWVNDSFERKDMERELLTKLFVSLCNSRNNLLSKSHLTAGLATVLGSLEDALSDAPRAAEYLGRLLARFVVESILSLQEVGTLIEKGGEEPGELVHHGIGADVLGAVLESIKVEKGDSFLNEAKASSNLKLEDFRPQHLKRSKLDAFMKA.

Residues 1 to 12 are compositionally biased toward basic and acidic residues; the sequence is MSQRGDRGEGHA. Disordered stretches follow at residues 1–285, 424–446, 491–590, 612–659, 678–761, 874–912, 960–993, 999–1018, 1275–1299, 1407–1503, and 1537–1600; these read MSQR…PRPP, DSSG…TYGS, SPSM…PTPV, NSVP…EDLK, GVNK…NESH, VASE…EITR, SSSI…LDDW, MSTP…EANG, GERE…EERE, WQQR…HRTT, and ELSS…KLYS. The span at 21–42 shows a compositional bias: gly residues; that stretch reads FGGGHRGGGGVGGAGKGGGGSS. Pro residues predominate over residues 88–107; sequence PLRPPAPQNAPAHVPVPAPR. Polar residues-rich tracts occupy residues 147 to 156 and 179 to 191; these read RISSTSTSQG and STMQ…SSAP. Low complexity-rich tracts occupy residues 216–243, 263–278, and 432–442; these read PQAP…PLQQ, PSQV…SVPN, and PSVQQQSQPVS. Over residues 491-517 the composition is skewed to polar residues; sequence SPSMNTGPGSNKDNLAGSTTSGHSQVT. 3 stretches are compositionally biased toward basic and acidic residues: residues 545–564, 571–587, and 633–643; these read DVNK…KDNE, KSGE…EKHP, and DSNKNATKDTR. Polar residues predominate over residues 644-654; that stretch reads NLSQEPQSASS. A compositionally biased stretch (low complexity) spans 699-718; it reads AADASSIDRSSARSTSESTE. Positions 964 to 990 are enriched in basic and acidic residues; the sequence is ADHELPDESSEKEVNMGEDEGKKKVEL. Residues 1018–1030 are EIF4E-binding; that stretch reads GRKRYSRDFLLTL. Residues 1183-1406 form the MIF4G domain; the sequence is QRQLKAILNK…RDSIDLRKNK (224 aa). Over residues 1278–1289 the composition is skewed to acidic residues; it reads EEAEADKTEEEG. Basic and acidic residues-rich tracts occupy residues 1290–1299 and 1411–1432; these read EIKQTKEERE and RKVE…ERHA. Low complexity-rich tracts occupy residues 1439 to 1450 and 1461 to 1470; these read RGSVVGSGPRRG and SAAALASPSS. Composition is skewed to basic and acidic residues over residues 1490-1503 and 1559-1572; these read IRFE…HRTT and AREE…DRSG. Residues 1576 to 1593 show a composition bias toward polar residues; the sequence is PNTQFAGPSNRPASQEGR. An MI domain is found at 1603 to 1727; the sequence is DLREKSISAI…SLQEVGTLIE (125 aa).

Belongs to the eukaryotic initiation factor 4G family. In terms of assembly, EIF4F is a multi-subunit complex, the composition of which varies with external and internal environmental conditions. It is composed of at least EIF4A, EIF4E and EIF4G. In higher plants two isoforms of EIF4F have been identified, named isoform EIF4F and isoform EIF(iso)4F. Isoform EIF4F has subunits p220 and p26, whereas isoform EIF(iso)4F has subunits p82 and p28.

In terms of biological role, component of the protein complex eIF4F, which is involved in the recognition of the mRNA cap, ATP-dependent unwinding of 5'-terminal secondary structure and recruitment of mRNA to the ribosome. This is Eukaryotic translation initiation factor 4G from Oryza sativa subsp. japonica (Rice).